The following is a 191-amino-acid chain: Large ribosomal subunit protein uL6A (191 aa).

The protein belongs to the universal ribosomal protein uL6 family. As to quaternary structure, component of the large ribosomal subunit (LSU). Mature yeast ribosomes consist of a small (40S) and a large (60S) subunit. The 40S small subunit contains 1 molecule of ribosomal RNA (18S rRNA) and 33 different proteins (encoded by 57 genes). The large 60S subunit contains 3 rRNA molecules (25S, 5.8S and 5S rRNA) and 46 different proteins (encoded by 81 genes). uL6 lines the binding pocket for eukaryotic elongation factor 2 (eEF2).

The protein localises to the cytoplasm. Component of the ribosome, a large ribonucleoprotein complex responsible for the synthesis of proteins in the cell. The small ribosomal subunit (SSU) binds messenger RNAs (mRNAs) and translates the encoded message by selecting cognate aminoacyl-transfer RNA (tRNA) molecules. The large subunit (LSU) contains the ribosomal catalytic site termed the peptidyl transferase center (PTC), which catalyzes the formation of peptide bonds, thereby polymerizing the amino acids delivered by tRNAs into a polypeptide chain. The nascent polypeptides leave the ribosome through a tunnel in the LSU and interact with protein factors that function in enzymatic processing, targeting, and the membrane insertion of nascent chains at the exit of the ribosomal tunnel. The polypeptide is Large ribosomal subunit protein uL6A (Saccharomyces cerevisiae (strain ATCC 204508 / S288c) (Baker's yeast)).